A 276-amino-acid polypeptide reads, in one-letter code: MPELPEVEVTRRGIEPYVSGRKVERVEVRTPALRWPIPADLAKTLRGRVVRKVERRGKYLLFEIDAGWFIVHLGMTGTLRVLRHVPHPPAAAKHDHVDWIFDEFILRYRDPRRFGAVLWHPREAGDVLEHPLLAGLGVEPFSPAFSGALMHRLTRGRKVSVKQALLAGEIVVGVGNIYASESLFRAGIRPATAAGRVSLVRYDLLADAVRVTLAAAIEKGGSTLRDFVGSNGESGYFQLDYFVYDRAGLPCRVCGTPIKQIVQGQRSTYFCPTCQR.

Proline 2 (schiff-base intermediate with DNA) is an active-site residue. Catalysis depends on glutamate 3, which acts as the Proton donor. The active-site Proton donor; for beta-elimination activity is lysine 58. Histidine 94, arginine 112, and arginine 157 together coordinate DNA. The FPG-type zinc-finger motif lies at 242–276 (FVYDRAGLPCRVCGTPIKQIVQGQRSTYFCPTCQR). Arginine 266 (proton donor; for delta-elimination activity) is an active-site residue.

The protein belongs to the FPG family. Monomer. Zn(2+) serves as cofactor.

It carries out the reaction Hydrolysis of DNA containing ring-opened 7-methylguanine residues, releasing 2,6-diamino-4-hydroxy-5-(N-methyl)formamidopyrimidine.. The enzyme catalyses 2'-deoxyribonucleotide-(2'-deoxyribose 5'-phosphate)-2'-deoxyribonucleotide-DNA = a 3'-end 2'-deoxyribonucleotide-(2,3-dehydro-2,3-deoxyribose 5'-phosphate)-DNA + a 5'-end 5'-phospho-2'-deoxyribonucleoside-DNA + H(+). Its function is as follows. Involved in base excision repair of DNA damaged by oxidation or by mutagenic agents. Acts as a DNA glycosylase that recognizes and removes damaged bases. Has a preference for oxidized purines, such as 7,8-dihydro-8-oxoguanine (8-oxoG). Has AP (apurinic/apyrimidinic) lyase activity and introduces nicks in the DNA strand. Cleaves the DNA backbone by beta-delta elimination to generate a single-strand break at the site of the removed base with both 3'- and 5'-phosphates. The sequence is that of Formamidopyrimidine-DNA glycosylase from Paraburkholderia xenovorans (strain LB400).